We begin with the raw amino-acid sequence, 160 residues long: Siroheme decarboxylase NirH subunit (160 aa).

Belongs to the Ahb/Nir family. Forms a complex composed of NirDL, NirG and NirH. All proteins are required for the total conversion of siroheme to didecarboxysiroheme.

The enzyme catalyses siroheme + 2 H(+) = 12,18-didecarboxysiroheme + 2 CO2. The protein operates within porphyrin-containing compound metabolism. Involved in heme d1 biosynthesis. Catalyzes the decarboxylation of siroheme into didecarboxysiroheme. Siroheme is probably decarboxylated to monodecarboxysiroheme, which is in turn decarboxylated to didecarboxysiroheme. This Paracoccus pantotrophus (Thiosphaera pantotropha) protein is Siroheme decarboxylase NirH subunit.